A 269-amino-acid chain; its full sequence is L-cystine-binding protein TcyJ (269 aa).

Residues 1–20 form the signal peptide; sequence MNKRKGLVLLLSVFALLGGG. A lipid anchor (N-palmitoyl cysteine) is attached at Cys-21. A lipid anchor (S-diacylglycerol cysteine) is attached at Cys-21.

It belongs to the bacterial solute-binding protein 3 family. In terms of assembly, the complex is composed of two ATP-binding proteins (TcyN), two transmembrane proteins (TcyL and TcyM) and two solute-binding proteins (TcyJ and TcyK).

The protein resides in the cell membrane. Part of the ABC transporter complex TcyJKLMN involved in L-cystine import. Is also involved in cystathionine, djenkolate, and S-methylcysteine transport. The polypeptide is L-cystine-binding protein TcyJ (tcyJ) (Bacillus subtilis (strain 168)).